We begin with the raw amino-acid sequence, 420 residues long: L-rhamnose isomerase (420 aa).

Mn(2+) is bound by residues H264, D296, and D298.

The protein belongs to the rhamnose isomerase family. The cofactor is Mn(2+).

Its subcellular location is the cytoplasm. The enzyme catalyses L-rhamnopyranose = L-rhamnulose. It participates in carbohydrate degradation; L-rhamnose degradation; glycerone phosphate from L-rhamnose: step 1/3. Functionally, catalyzes the interconversion of L-rhamnose and L-rhamnulose. In Listeria monocytogenes serotype 4b (strain F2365), this protein is L-rhamnose isomerase.